The sequence spans 185 residues: RING-H2 finger protein ATL8 (185 aa).

Residues 28-48 (LVLILAVLLCALTCIIGLIAV) traverse the membrane as a helical segment. The RING-type; atypical zinc finger occupies 104-146 (CAICLTEFAAGDELRVLPQCGHGFHVSCIDTWLGSHSSCPSCR). The tract at residues 161 to 185 (PGSSSSGPEPDTRIKQREDGPDNLP) is disordered. The span at 170 to 185 (PDTRIKQREDGPDNLP) shows a compositional bias: basic and acidic residues.

This sequence belongs to the RING-type zinc finger family. ATL subfamily.

The protein resides in the membrane. It carries out the reaction S-ubiquitinyl-[E2 ubiquitin-conjugating enzyme]-L-cysteine + [acceptor protein]-L-lysine = [E2 ubiquitin-conjugating enzyme]-L-cysteine + N(6)-ubiquitinyl-[acceptor protein]-L-lysine.. Its pathway is protein modification; protein ubiquitination. The polypeptide is RING-H2 finger protein ATL8 (ATL8) (Arabidopsis thaliana (Mouse-ear cress)).